Consider the following 404-residue polypeptide: Putative aspartate aminotransferase, cytoplasmic 2 (404 aa).

The residue at position 249 (lysine 249) is an N6-(pyridoxal phosphate)lysine.

The protein belongs to the class-I pyridoxal-phosphate-dependent aminotransferase family. In terms of assembly, homodimer. Pyridoxal 5'-phosphate serves as cofactor.

The protein localises to the cytoplasm. It carries out the reaction L-aspartate + 2-oxoglutarate = oxaloacetate + L-glutamate. The polypeptide is Putative aspartate aminotransferase, cytoplasmic 2 (Got1l1) (Mus musculus (Mouse)).